We begin with the raw amino-acid sequence, 558 residues long: Formate--tetrahydrofolate ligase (558 aa).

66 to 73 (TPAGEGKT) provides a ligand contact to ATP.

This sequence belongs to the formate--tetrahydrofolate ligase family.

The catalysed reaction is (6S)-5,6,7,8-tetrahydrofolate + formate + ATP = (6R)-10-formyltetrahydrofolate + ADP + phosphate. It participates in one-carbon metabolism; tetrahydrofolate interconversion. In Neisseria gonorrhoeae (strain NCCP11945), this protein is Formate--tetrahydrofolate ligase.